The chain runs to 466 residues: Ribulose bisphosphate carboxylase large chain (466 aa).

K5 carries the N6,N6,N6-trimethyllysine modification. Positions 114 and 164 each coordinate substrate. K166 (proton acceptor) is an active-site residue. K168 is a substrate binding site. Residues K192, D194, and E195 each contribute to the Mg(2+) site. Residue K192 is modified to N6-carboxylysine. The active-site Proton acceptor is H285. Residues R286, H318, and S370 each contribute to the substrate site.

It belongs to the RuBisCO large chain family. Type I subfamily. As to quaternary structure, heterohexadecamer of 8 large chains and 8 small chains; disulfide-linked. The disulfide link is formed within the large subunit homodimers. Mg(2+) serves as cofactor. Post-translationally, the disulfide bond which can form in the large chain dimeric partners within the hexadecamer appears to be associated with oxidative stress and protein turnover.

It is found in the plastid. The protein resides in the chloroplast. The enzyme catalyses 2 (2R)-3-phosphoglycerate + 2 H(+) = D-ribulose 1,5-bisphosphate + CO2 + H2O. It carries out the reaction D-ribulose 1,5-bisphosphate + O2 = 2-phosphoglycolate + (2R)-3-phosphoglycerate + 2 H(+). RuBisCO catalyzes two reactions: the carboxylation of D-ribulose 1,5-bisphosphate, the primary event in carbon dioxide fixation, as well as the oxidative fragmentation of the pentose substrate in the photorespiration process. Both reactions occur simultaneously and in competition at the same active site. This is Ribulose bisphosphate carboxylase large chain from Silene gallica (Common catchfly).